A 141-amino-acid polypeptide reads, in one-letter code: uncharacterized protein (141 aa).

This is an uncharacterized protein from Borreliella burgdorferi (strain ATCC 35210 / DSM 4680 / CIP 102532 / B31) (Borrelia burgdorferi).